A 134-amino-acid chain; its full sequence is Large ribosomal subunit protein bL19 (134 aa).

Residues 108-134 form a disordered region; sequence KSARIVERSDRSDKAKAQKAAAATAAE. Positions 111–123 are enriched in basic and acidic residues; sequence RIVERSDRSDKAK. Low complexity predominate over residues 125 to 134; sequence QKAAAATAAE.

It belongs to the bacterial ribosomal protein bL19 family.

This protein is located at the 30S-50S ribosomal subunit interface and may play a role in the structure and function of the aminoacyl-tRNA binding site. The protein is Large ribosomal subunit protein bL19 of Methylorubrum extorquens (strain PA1) (Methylobacterium extorquens).